The sequence spans 240 residues: Transcription factor bHLH47 (240 aa).

Over residues 1-13 the composition is skewed to polar residues; it reads MVSKTPSTSSDEA. The segment at 1 to 26 is disordered; that stretch reads MVSKTPSTSSDEANATADERCRKGKV. One can recognise a bHLH domain in the interval 27-77; sequence PKRINKAVRERLKREHLNELFIELADTLELNQQNSGKASILCEATRFLKDV. Residues 98 to 131 are a coiled coil; the sequence is VTTEKNELKEETSVLETEISKLQNEIEARANQSK. Residues 128-138 are compositionally biased toward polar residues; it reads NQSKPDLNTSP. A disordered region spans residues 128–153; sequence NQSKPDLNTSPAPEYHHHHYQQQHPE.

In terms of assembly, homodimer. Forms heterodimer with PYEL proteins bHLH115, bHLH104 and ILR3. As to expression, expressed constitutively in roots, leaves, stems, and flowers.

It localises to the nucleus. The chain is Transcription factor bHLH47 (BHLH47) from Arabidopsis thaliana (Mouse-ear cress).